A 1225-amino-acid polypeptide reads, in one-letter code: ABC transporter B family member 18 (1225 aa).

6 consecutive transmembrane segments (helical) span residues 23–43 (MALGLIGAVGDGFITPIIFFI), 70–90 (VALVYVACASWVICFIEGYCW), 146–168 (LPNFLMNTSAFVASYIVGFLLLW), 172–194 (IVGFPFIILLLIPGLMYGRALIR), 252–272 (GIAIGSNGITYAIWGFLTWYG), and 284–304 (GTVSSVIVCVTFGGTSLGQSL). An ABC transmembrane type-1 1 domain is found at 23–312 (MALGLIGAVG…SLSNLKYFSE (290 aa)). In terms of domain architecture, ABC transporter 1 spans 347 to 583 (VEFNHVKFTY…LDGQYTSLVR (237 aa)). ATP is bound at residue 382 to 389 (GGSGSGKS). N-linked (GlcNAc...) asparagine glycosylation is present at Asn-530. Helical transmembrane passes span 657-677 (ALYGCLGAALFGAVQPIYSYS) and 699-719 (IYVLLFVGLALFTFLSNISQH). In terms of domain architecture, ABC transmembrane type-1 2 spans 657–945 (ALYGCLGAAL…AGTMTKDLVK (289 aa)). The N-linked (GlcNAc...) asparagine glycan is linked to Asn-754. A run of 4 helical transmembrane segments spans residues 780-800 (LLVQTISAVSITCAIGLVISW), 804-824 (IVMMSVQPVIVVCFYTQRVLL), 880-900 (SWLAGIMLGTSQSLITCVSAL), and 919-939 (FLEIFLIFASTGRVIAEAGTM). Asn-960 and Asn-1000 each carry an N-linked (GlcNAc...) asparagine glycan. In terms of domain architecture, ABC transporter 2 spans 980 to 1218 (ISFSNVDFAY…GPKGAYFSLV (239 aa)). Residue 1015–1022 (GPSGSGKS) coordinates ATP. N-linked (GlcNAc...) asparagine glycosylation is present at Asn-1201.

It belongs to the ABC transporter superfamily. ABCB family. Multidrug resistance exporter (TC 3.A.1.201) subfamily.

It localises to the membrane. This chain is ABC transporter B family member 18 (ABCB18), found in Arabidopsis thaliana (Mouse-ear cress).